Here is a 270-residue protein sequence, read N- to C-terminus: Phosphonates import ATP-binding protein PhnC 2 (270 aa).

Residues 2-245 (LVVEGLTCRF…IARELYDLEA (244 aa)) form the ABC transporter domain. 34–41 (GRSGAGKS) contacts ATP.

This sequence belongs to the ABC transporter superfamily. Phosphonates importer (TC 3.A.1.9.1) family. As to quaternary structure, the complex is composed of two ATP-binding proteins (PhnC), two transmembrane proteins (PhnE) and a solute-binding protein (PhnD).

It is found in the cell inner membrane. The catalysed reaction is phosphonate(out) + ATP + H2O = phosphonate(in) + ADP + phosphate + H(+). Its function is as follows. Part of the ABC transporter complex PhnCDE involved in phosphonates import. Responsible for energy coupling to the transport system. The polypeptide is Phosphonates import ATP-binding protein PhnC 2 (Rhodopseudomonas palustris (strain BisA53)).